We begin with the raw amino-acid sequence, 446 residues long: Exodeoxyribonuclease 7 large subunit (446 aa).

This sequence belongs to the XseA family. In terms of assembly, heterooligomer composed of large and small subunits.

It is found in the cytoplasm. The catalysed reaction is Exonucleolytic cleavage in either 5'- to 3'- or 3'- to 5'-direction to yield nucleoside 5'-phosphates.. Its function is as follows. Bidirectionally degrades single-stranded DNA into large acid-insoluble oligonucleotides, which are then degraded further into small acid-soluble oligonucleotides. The protein is Exodeoxyribonuclease 7 large subunit of Streptococcus pneumoniae (strain Hungary19A-6).